The following is a 225-amino-acid chain: UPF0758 protein Sden_0326 (225 aa).

Residues 102–224 (ILTNPDLTRD…IVSFAERGWL (123 aa)) enclose the MPN domain. Zn(2+)-binding residues include histidine 173, histidine 175, and aspartate 186. The JAMM motif motif lies at 173–186 (HNHPSGIAEPSQAD).

The protein belongs to the UPF0758 family.

In Shewanella denitrificans (strain OS217 / ATCC BAA-1090 / DSM 15013), this protein is UPF0758 protein Sden_0326.